The sequence spans 428 residues: Histidine--tRNA ligase (428 aa).

This sequence belongs to the class-II aminoacyl-tRNA synthetase family. As to quaternary structure, homodimer.

It localises to the cytoplasm. The enzyme catalyses tRNA(His) + L-histidine + ATP = L-histidyl-tRNA(His) + AMP + diphosphate + H(+). This Chlamydia trachomatis serovar A (strain ATCC VR-571B / DSM 19440 / HAR-13) protein is Histidine--tRNA ligase.